The following is a 252-amino-acid chain: 3-dehydroquinate dehydratase (252 aa).

3-dehydroquinate-binding positions include serine 21, 46–48 (EWR), and arginine 82. Histidine 143 functions as the Proton donor/acceptor in the catalytic mechanism. Lysine 170 serves as the catalytic Schiff-base intermediate with substrate. 3-dehydroquinate is bound by residues arginine 213, serine 232, and glutamine 236.

Belongs to the type-I 3-dehydroquinase family. Homodimer.

It carries out the reaction 3-dehydroquinate = 3-dehydroshikimate + H2O. It functions in the pathway metabolic intermediate biosynthesis; chorismate biosynthesis; chorismate from D-erythrose 4-phosphate and phosphoenolpyruvate: step 3/7. Its function is as follows. Involved in the third step of the chorismate pathway, which leads to the biosynthesis of aromatic amino acids. Catalyzes the cis-dehydration of 3-dehydroquinate (DHQ) and introduces the first double bond of the aromatic ring to yield 3-dehydroshikimate. The polypeptide is 3-dehydroquinate dehydratase (Escherichia coli O157:H7).